We begin with the raw amino-acid sequence, 140 residues long: MLKEFQEFISKGNVMDLAVGVIIGAAFGKIVDSLVNDIIMPVIGAIFGGLDFNNYFVGLSSAVNATSLADAKKQGAVFAYGSFITVALNFVILAFIIFLMVKAVNNLRRRLEREKPATPAAPPPADVALLTEIRDLLARR.

A run of 3 helical transmembrane segments spans residues 8 to 28 (FISK…AAFG), 30 to 50 (IVDS…FGGL), and 81 to 101 (GSFI…FLMV).

The protein belongs to the MscL family. In terms of assembly, homopentamer.

It is found in the cell inner membrane. Channel that opens in response to stretch forces in the membrane lipid bilayer. May participate in the regulation of osmotic pressure changes within the cell. The sequence is that of Large-conductance mechanosensitive channel 2 from Mesorhizobium japonicum (strain LMG 29417 / CECT 9101 / MAFF 303099) (Mesorhizobium loti (strain MAFF 303099)).